Here is a 688-residue protein sequence, read N- to C-terminus: Glycine--tRNA ligase beta subunit (688 aa).

The protein belongs to the class-II aminoacyl-tRNA synthetase family. As to quaternary structure, tetramer of two alpha and two beta subunits.

The protein resides in the cytoplasm. It carries out the reaction tRNA(Gly) + glycine + ATP = glycyl-tRNA(Gly) + AMP + diphosphate. The polypeptide is Glycine--tRNA ligase beta subunit (Vibrio parahaemolyticus serotype O3:K6 (strain RIMD 2210633)).